The following is a 348-amino-acid chain: Anthranilate phosphoribosyltransferase (348 aa).

Residues glycine 81, 84-85, 91-94, 109-117, and serine 121 each bind 5-phospho-alpha-D-ribose 1-diphosphate; these read GD, NVST, and KHGNRAVSG. Glycine 81 provides a ligand contact to anthranilate. Serine 93 is a Mg(2+) binding site. Asparagine 112 contacts anthranilate. Residue arginine 167 participates in anthranilate binding. Positions 226 and 227 each coordinate Mg(2+).

The protein belongs to the anthranilate phosphoribosyltransferase family. As to quaternary structure, homodimer. It depends on Mg(2+) as a cofactor.

It carries out the reaction N-(5-phospho-beta-D-ribosyl)anthranilate + diphosphate = 5-phospho-alpha-D-ribose 1-diphosphate + anthranilate. The protein operates within amino-acid biosynthesis; L-tryptophan biosynthesis; L-tryptophan from chorismate: step 2/5. Functionally, catalyzes the transfer of the phosphoribosyl group of 5-phosphorylribose-1-pyrophosphate (PRPP) to anthranilate to yield N-(5'-phosphoribosyl)-anthranilate (PRA). This Azotobacter vinelandii (strain DJ / ATCC BAA-1303) protein is Anthranilate phosphoribosyltransferase.